The chain runs to 510 residues: ATP synthase subunit alpha (510 aa).

169–176 (GDRQTGKT) contacts ATP.

The protein belongs to the ATPase alpha/beta chains family. As to quaternary structure, F-type ATPases have 2 components, CF(1) - the catalytic core - and CF(0) - the membrane proton channel. CF(1) has five subunits: alpha(3), beta(3), gamma(1), delta(1), epsilon(1). CF(0) has four main subunits: a(1), b(1), b'(1) and c(9-12).

Its subcellular location is the cell inner membrane. The enzyme catalyses ATP + H2O + 4 H(+)(in) = ADP + phosphate + 5 H(+)(out). Functionally, produces ATP from ADP in the presence of a proton gradient across the membrane. The alpha chain is a regulatory subunit. This is ATP synthase subunit alpha from Rhodopseudomonas palustris (strain BisB5).